The following is a 1012-amino-acid chain: Roundabout homolog 4 (1012 aa).

The signal sequence occupies residues 1-27 (MGSGGTGLLGTEWPLPLLLLFIMGGEA). Ig-like C2-type domains are found at residues 32–132 (PQIL…ARLS) and 138–225 (EDFQ…ARVS). Disulfide bonds link cysteine 53–cysteine 115 and cysteine 159–cysteine 208. 2 N-linked (GlcNAc...) asparagine glycosylation sites follow: asparagine 201 and asparagine 247. 2 Fibronectin type-III domains span residues 249 to 346 (TLLN…LPEQ) and 348 to 443 (PSAP…LEQA). 3 N-linked (GlcNAc...) asparagine glycosylation sites follow: asparagine 361, asparagine 390, and asparagine 397. Disordered stretches follow at residues 533–553 (TSGS…GLDP) and 586–616 (LIAE…AGTS). A compositionally biased stretch (low complexity) spans 534–550 (SGSRDLSSSSSLSSRLG). Over residues 592–601 (SSPPVRPSPK) the composition is skewed to pro residues. Asparagine 681 and asparagine 713 each carry an N-linked (GlcNAc...) asparagine glycan. The tract at residues 711–801 (HRNSSELASR…LEEEEDQDSV (91 aa)) is disordered. Over residues 745–759 (LQAPSSDPLPAAPLS) the composition is skewed to low complexity. Over residues 760–771 (VLNSSRPSSPQA) the composition is skewed to polar residues. N-linked (GlcNAc...) asparagine glycans are attached at residues asparagine 762 and asparagine 783. Residues 772–791 (SFLSCPSPSSSNLSSSSLSS) show a composition bias toward low complexity. A phosphoserine mark is found at serine 814 and serine 947. Residues 980–1012 (RLGRGLPPWPPDSRASSQRSWLTGAVPKAGDSS) form a disordered region.

Belongs to the immunoglobulin superfamily. ROBO family. In terms of assembly, interacts with SLIT2 and ENAH. In terms of tissue distribution, expressed specifically in embryo and adult vascular endothelium.

Receptor for Slit proteins, at least for SLIT2, and seems to be involved in angiogenesis and vascular patterning. May mediate the inhibition of primary endothelial cell migration by Slit proteins. Involved in the maintenance of endothelial barrier organization and function. This is Roundabout homolog 4 (Robo4) from Mus musculus (Mouse).